The chain runs to 159 residues: Ribosomal RNA large subunit methyltransferase H (159 aa).

Residues L76, G108, and 127 to 132 each bind S-adenosyl-L-methionine; that span reads FSKMTF.

The protein belongs to the RNA methyltransferase RlmH family. In terms of assembly, homodimer.

It is found in the cytoplasm. The catalysed reaction is pseudouridine(1915) in 23S rRNA + S-adenosyl-L-methionine = N(3)-methylpseudouridine(1915) in 23S rRNA + S-adenosyl-L-homocysteine + H(+). Functionally, specifically methylates the pseudouridine at position 1915 (m3Psi1915) in 23S rRNA. This chain is Ribosomal RNA large subunit methyltransferase H, found in Clostridium novyi (strain NT).